We begin with the raw amino-acid sequence, 121 residues long: Large ribosomal subunit protein uL24 (121 aa).

The protein belongs to the universal ribosomal protein uL24 family. As to quaternary structure, part of the 50S ribosomal subunit.

In terms of biological role, one of two assembly initiator proteins, it binds directly to the 5'-end of the 23S rRNA, where it nucleates assembly of the 50S subunit. Its function is as follows. Located at the polypeptide exit tunnel on the outside of the subunit. The chain is Large ribosomal subunit protein uL24 from Pyrococcus furiosus (strain ATCC 43587 / DSM 3638 / JCM 8422 / Vc1).